The sequence spans 81 residues: uncharacterized protein (81 aa).

This is an uncharacterized protein from Bacillus subtilis (strain 168).